The primary structure comprises 142 residues: Large ribosomal subunit protein uL13 (142 aa).

Belongs to the universal ribosomal protein uL13 family. In terms of assembly, part of the 50S ribosomal subunit.

Functionally, this protein is one of the early assembly proteins of the 50S ribosomal subunit, although it is not seen to bind rRNA by itself. It is important during the early stages of 50S assembly. This is Large ribosomal subunit protein uL13 from Helicobacter hepaticus (strain ATCC 51449 / 3B1).